A 74-amino-acid polypeptide reads, in one-letter code: Protein krueppel (74 aa).

C2H2-type zinc fingers lie at residues 1-4, 10-32, 38-60, and 66-74; these read ERTH, FECP…MRLH, YHCS…LRVH, and YACELCDAR.

The protein belongs to the krueppel C2H2-type zinc-finger protein family.

Its subcellular location is the nucleus. Functionally, krueppel is a gap class segmentation protein. This Psychoda cinerea (Psychod fly) protein is Protein krueppel (Kr).